A 384-amino-acid chain; its full sequence is DNA polymerase IV (384 aa).

The region spanning 5–182 (IIHVDMDAFF…LPVTKVHGIG (178 aa)) is the UmuC domain. Residues Asp9, Met10, and Asp103 each coordinate Mg(2+). Residue Glu104 is part of the active site.

It belongs to the DNA polymerase type-Y family. In terms of assembly, monomer. It depends on Mg(2+) as a cofactor.

The protein resides in the cytoplasm. It carries out the reaction DNA(n) + a 2'-deoxyribonucleoside 5'-triphosphate = DNA(n+1) + diphosphate. Functionally, poorly processive, error-prone DNA polymerase involved in translesion repair and untargeted mutagenesis. Copies undamaged DNA at stalled replication forks, which arise in vivo from mismatched or misaligned primer ends. These misaligned primers can be extended by PolIV. Exhibits no 3'-5' exonuclease (proofreading) activity. Involved in translesional synthesis. Primer extension fidelity in vitro is temperature-dependent. Inserts a correct base opposite templating bases at 70 degrees Celsius, but at 37 degrees Celsius in addition to correct base pairing, base transitions, transversions and frameshifts can occur. Preferably forms erroneous base pairs C:T. Bypasses 8-oxo-dG oxidative damage by incorporating dATP or dCTP opposite of the damaged DNA template site at both temperatures in vitro. The protein is DNA polymerase IV of Caldanaerobacter subterraneus subsp. tengcongensis (strain DSM 15242 / JCM 11007 / NBRC 100824 / MB4) (Thermoanaerobacter tengcongensis).